The chain runs to 309 residues: Ribonuclease H2 subunit B (309 aa).

N-acetylalanine is present on Ala2. Lys295 carries the post-translational modification N6-acetyllysine. Ser296 bears the Phosphoserine mark.

This sequence belongs to the RNase H2 subunit B family. As to quaternary structure, the RNase H2 complex is a heterotrimer composed of the catalytic subunit RNASEH2A and the non-catalytic subunits RNASEH2B and RNASEH2C.

It localises to the nucleus. In terms of biological role, non catalytic subunit of RNase H2, an endonuclease that specifically degrades the RNA of RNA:DNA hybrids. Participates in DNA replication, possibly by mediating the removal of lagging-strand Okazaki fragment RNA primers during DNA replication. Mediates the excision of single ribonucleotides from DNA:RNA duplexes. The polypeptide is Ribonuclease H2 subunit B (RNASEH2B) (Bos taurus (Bovine)).